Consider the following 1353-residue polypeptide: Stress response protein NST1 (1353 aa).

The segment covering 1 to 12 (MSSKSQQPPTGL) has biased composition (polar residues). Disordered stretches follow at residues 1–66 (MSSK…FFNF), 216–422 (NANA…TQSS), 503–522 (NGLR…VEVD), 531–618 (DHRA…SFGS), 652–694 (RRSV…AEEG), 727–882 (LREL…AKET), 979–1119 (GLKS…DDAF), 1140–1276 (GSLI…GAGV), and 1308–1337 (GGTA…HQQQ). A compositionally biased stretch (basic residues) spans 16 to 25 (AAKKRAKKAA). The segment covering 26–45 (KQSQNPQPQSAPQTSSQTPA) has biased composition (low complexity). Positions 46–59 (SVPPLPPASVPDPL) are enriched in pro residues. Over residues 218 to 229 (NARSFPSPQQTI) the composition is skewed to polar residues. The segment covering 242–254 (REEEYDDEEEIEE) has biased composition (acidic residues). Over residues 268 to 277 (KKNKKKKKKG) the composition is skewed to basic residues. Positions 287–300 (VEPPAPLPPLPPPS) are enriched in pro residues. A compositionally biased stretch (low complexity) spans 317 to 330 (LPTHQPQPLSQQPP). Positions 331–349 (SLNPLPPPAPASAPTPTPP) are enriched in pro residues. Positions 368 to 388 (PARSARAAGKAPASAAPPHNA) are enriched in low complexity. The span at 531 to 541 (DHRAPELHDHD) shows a compositional bias: basic and acidic residues. The span at 542-583 (PDDLDGEESEEYDDDDDYADDDELDDDDIGTDEADVGDEIDE) shows a compositional bias: acidic residues. Positions 654-665 (SVREEQNLRDMQ) are enriched in basic and acidic residues. Residues 666 to 681 (EETDEEEEEEDDDESR) are compositionally biased toward acidic residues. 3 stretches are compositionally biased toward basic and acidic residues: residues 682 to 694 (DEPM…AEEG), 727 to 750 (LREL…EAQK), and 760 to 882 (QKAE…AKET). A coiled-coil region spans residues 713-944 (AYRERVAKQR…AAQQAQRERA (232 aa)). The span at 1009-1021 (TNATPGRSMQKTP) shows a compositional bias: polar residues. Pro residues predominate over residues 1154 to 1165 (PTPPAPIAPPNL). Polar residues-rich tracts occupy residues 1174–1187 (SDGQ…LRST) and 1209–1220 (QPQQRRPTTSWD).

This sequence belongs to the NST1 family.

It localises to the cytoplasm. May act as a negative regulator of salt tolerance. This Cryptococcus neoformans var. neoformans serotype D (strain B-3501A) (Filobasidiella neoformans) protein is Stress response protein NST1 (NST1).